Here is a 643-residue protein sequence, read N- to C-terminus: Translation factor GUF1, mitochondrial (643 aa).

Residues methionine 1 to leucine 18 constitute a mitochondrion transit peptide. One can recognise a tr-type G domain in the interval glutamate 43 to threonine 226. GTP is bound by residues alanine 52–serine 59, aspartate 118–histidine 122, and asparagine 172–aspartate 175.

It belongs to the TRAFAC class translation factor GTPase superfamily. Classic translation factor GTPase family. LepA subfamily.

Its subcellular location is the mitochondrion inner membrane. The enzyme catalyses GTP + H2O = GDP + phosphate + H(+). In terms of biological role, promotes mitochondrial protein synthesis. May act as a fidelity factor of the translation reaction, by catalyzing a one-codon backward translocation of tRNAs on improperly translocated ribosomes. Binds to mitochondrial ribosomes in a GTP-dependent manner. The sequence is that of Translation factor GUF1, mitochondrial from Zygosaccharomyces rouxii (strain ATCC 2623 / CBS 732 / NBRC 1130 / NCYC 568 / NRRL Y-229).